The chain runs to 823 residues: Ciliated left-right organizer ZP-N domains-containing protein (823 aa).

The N-terminal stretch at 1–22 (MWGSPALAWAVWLACVQPTVFP) is a signal peptide. Disordered stretches follow at residues 206 to 242 (MGLYVDMNATTVTVQSPRQGLLQRWEVLNTSAELLPL), 269 to 422 (LVHI…DLLH), 434 to 520 (GPFL…SPSP), and 632 to 656 (LPREGARGHMDLSSSEPSQDIEGPG). Pro residues predominate over residues 216-230 (TVTVQSPRQGLLQRW). Positions 389-402 (GPETPPAGVPPAAS) are enriched in low complexity.

It is found in the secreted. Plays a role in left-right patterning process. The protein is Ciliated left-right organizer ZP-N domains-containing protein of Homo sapiens (Human).